A 361-amino-acid chain; its full sequence is Glyceraldehyde-3-phosphate dehydrogenase, glycosomal (361 aa).

NAD(+) contacts are provided by residues 13–14 (RI), Asp39, and Arg93. Residues 166–168 (SCT), Thr198, 227–228 (TG), and Arg250 each bind D-glyceraldehyde 3-phosphate. Cys167 functions as the Nucleophile in the catalytic mechanism. Asn336 contributes to the NAD(+) binding site. Positions 359 to 361 (SKL) match the Microbody targeting signal motif.

This sequence belongs to the glyceraldehyde-3-phosphate dehydrogenase family. As to quaternary structure, homotetramer.

It localises to the glycosome. The enzyme catalyses D-glyceraldehyde 3-phosphate + phosphate + NAD(+) = (2R)-3-phospho-glyceroyl phosphate + NADH + H(+). The protein operates within carbohydrate degradation; glycolysis; pyruvate from D-glyceraldehyde 3-phosphate: step 1/5. In Crithidia fasciculata, this protein is Glyceraldehyde-3-phosphate dehydrogenase, glycosomal (GAPDG).